The sequence spans 250 residues: Urease accessory protein UreF (250 aa).

Residues 1-21 (MDEADPGEAEAAQAEAAQDGA) form a disordered region. Positions 9 to 21 (AEAAQAEAAQDGA) are enriched in low complexity.

It belongs to the UreF family. UreD, UreF and UreG form a complex that acts as a GTP-hydrolysis-dependent molecular chaperone, activating the urease apoprotein by helping to assemble the nickel containing metallocenter of UreC. The UreE protein probably delivers the nickel.

It is found in the cytoplasm. Its function is as follows. Required for maturation of urease via the functional incorporation of the urease nickel metallocenter. The polypeptide is Urease accessory protein UreF (Methylobacterium sp. (strain 4-46)).